The sequence spans 307 residues: Sex-lethal homolog (307 aa).

2 RRM domains span residues 85–163 (TNLI…YARP) and 171–251 (TNLY…LAEE). A compositionally biased stretch (basic residues) spans 285–299 (HRGRHNKNRNQKPHP). The disordered stretch occupies residues 285 to 307 (HRGRHNKNRNQKPHPYHNPQKFI).

It is found in the nucleus. Its function is as follows. Unknown; apparently not involved in somatic sex determination. The chain is Sex-lethal homolog (SXL) from Chrysomya rufifacies (Hairy maggot blowfly).